The following is a 4965-amino-acid chain: Auxin transport protein BIG (4965 aa).

3 helical membrane passes run 289–309, 646–666, and 772–792; these read SDICCTVQVCILASLLEIFSP, ACLAAYVVVSGNTSVMVAYEV, and LFLICWSTLSGIGYSGGYEGL. The tract at residues 1383-1425 is disordered; the sequence is TNQESNSTVDCDASSGEEDEDDGTSDGELVSIDRDEEEDGNSE. The span at 1397 to 1407 shows a compositional bias: acidic residues; sequence SGEEDEDDGTS. The UBR-type zinc-finger motif lies at 1431-1502; the sequence is KVCTFTSSGS…RGSSCQCLKP (72 aa). Residues 2437–2456 form a disordered region; sequence DDAPDNHAKASAASNSTTGN. Residues 2445 to 2456 show a composition bias toward low complexity; sequence KASAASNSTTGN. The segment at 2469–2528 adopts a ZZ-type zinc-finger fold; sequence SVQYCCDGCSTVPILRRRWHCNICPDFDLCETCYEILDADRLPAPHSRDHPMSAIPIELD. Positions 2474, 2477, 2489, 2492, 2498, 2501, 2514, and 2518 each coordinate Zn(2+). The interval 2997–3037 is disordered; it reads NAQKTESGDIGSSTRTGSQSSDSKKKRKGDDSSEGSSEKSC. Positions 3007 to 3017 are enriched in low complexity; sequence GSSTRTGSQSS. Positions 3024 to 3037 are enriched in basic and acidic residues; sequence KGDDSSEGSSEKSC. The segment at 3319 to 3359 adopts an MYND-type; degenerate zinc-finger fold; it reads CPRCSRSVTDKHGICSNCHENAYQCRQCRNINYENLDSFLC. Residues 3672–3721 form a disordered region; it reads PKSDSGEKEPGMGKSSLMQAKNDDTVGHSVTNLSTSKTQSELSGKIPDGS. Polar residues predominate over residues 3699–3713; it reads HSVTNLSTSKTQSEL. Positions 4433 to 4963 are UBR4 E3 catalytic module; it reads PSIPLILSML…DFVRAIIHGA (531 aa). Residues 4562–4681 form a HemiRING-type zinc finger; it reads GLACMVCREG…WDQLNSLGRA (120 aa). Zn(2+) is bound by residues Cys4565, Cys4568, His4615, and Cys4618. One can recognise a UZI domain in the interval 4684 to 4963; sequence SRLRLLTYDI…DFVRAIIHGA (280 aa). Positions 4753–4770 are enriched in low complexity; sequence SSSPSTPESPVRLSALSG. Disordered regions lie at residues 4753 to 4778 and 4822 to 4846; these read SSSPSTPESPVRLSALSGARGGSGSS and STLKLSADTSSSAVRSDEGSSADSN. A compositionally biased stretch (polar residues) spans 4824–4845; it reads LKLSADTSSSAVRSDEGSSADS.

The protein belongs to the UBR4 family.

The protein resides in the membrane. Functionally, required for auxin efflux and polar auxin transport (PAT) influencing auxin-mediated developmental responses (e.g. cell elongation, apical dominance, lateral root production, inflorescence architecture, general growth and development). The polypeptide is Auxin transport protein BIG (Oryza sativa subsp. japonica (Rice)).